The chain runs to 1132 residues: Tyrosine-protein kinase JAK2 (1132 aa).

The tract at residues 1 to 239 (MGMACLTMTE…RYRFRRFIQQ (239 aa)) is interaction with cytokine/interferon/growth hormone receptors. The FERM domain maps to 37–380 (PVLLVYLYHS…GYYRLTADAH (344 aa)). Position 119 is a phosphotyrosine; by autocatalysis (Tyr119). Residues Tyr372 and Tyr373 each carry the phosphotyrosine modification. Positions 401 to 482 (HGPISMDFAI…SLKDLLNCYQ (82 aa)) constitute an SH2; atypical domain. Ser523 carries the phosphoserine modification. The Protein kinase 1 domain maps to 545–809 (LIFNESLGQG…AIIRDLNSLF (265 aa)). Phosphotyrosine occurs at positions 570 and 813. Residues 849–1126 (LKFLQQLGKG…RDLALRVDQI (278 aa)) enclose the Protein kinase 2 domain. 855 to 863 (LGKGNFGSV) provides a ligand contact to ATP. Tyr868 carries the phosphotyrosine; by autocatalysis modification. Lys882 provides a ligand contact to ATP. Phosphotyrosine; by autocatalysis is present on residues Tyr966 and Tyr972. The active-site Proton acceptor is the Asp976. Residues Tyr1007 and Tyr1008 each carry the phosphotyrosine; by autocatalysis modification.

This sequence belongs to the protein kinase superfamily. Tyr protein kinase family. JAK subfamily. As to quaternary structure, interacts with IL23R, SKB1 and STAM2. Interacts with EPOR. Interacts with LYN. Interacts with SIRPA. Interacts with SH2B1. Interacts with TEC. Interacts with IFNGR2 (via intracellular domain). Interacts with LEPR (Isoform B). Interacts with HSP90AB1; promotes functional activation in a heat shock-dependent manner. Interacts with STRA6. Interacts with RHEX; this interaction occurs in a erythropoietin (EPO)-dependent manner. Interacts with ASB2; the interaction targets JAK2 for Notch-induced proteasomal degradation. It depends on Mg(2+) as a cofactor. Post-translationally, autophosphorylated, leading to regulate its activity. Leptin promotes phosphorylation on tyrosine residues, including phosphorylation on Tyr-813. Autophosphorylation on Tyr-119 in response to EPO down-regulates its kinase activity. Autophosphorylation on Tyr-868, Tyr-966 and Tyr-972 in response to growth hormone (GH) are required for maximal kinase activity. Also phosphorylated by TEC. Phosphorylated on tyrosine residues in response to interferon gamma signaling. Phosphorylated on tyrosine residues in response to a signaling cascade that is activated by increased cellular retinol. Undergoes Notch-induced ubiquitination and subsequent proteasomal degradation which is mediated by ASB1 or ASB2, the substrate-recognition components of probable ECS E3 ubiquitin-protein ligase complexes.

The protein resides in the endomembrane system. The protein localises to the cytoplasm. Its subcellular location is the nucleus. The enzyme catalyses L-tyrosyl-[protein] + ATP = O-phospho-L-tyrosyl-[protein] + ADP + H(+). Its activity is regulated as follows. Regulated by autophosphorylation, can both activate or decrease activity. Heme regulates its activity by enhancing the phosphorylation on Tyr-1007 and Tyr-1008. In terms of biological role, non-receptor tyrosine kinase involved in various processes such as cell growth, development, differentiation or histone modifications. Mediates essential signaling events in both innate and adaptive immunity. In the cytoplasm, plays a pivotal role in signal transduction via its association with type I receptors such as growth hormone (GHR), prolactin (PRLR), leptin (LEPR), erythropoietin (EPOR), thrombopoietin (THPO); or type II receptors including IFN-alpha, IFN-beta, IFN-gamma and multiple interleukins. Following ligand-binding to cell surface receptors, phosphorylates specific tyrosine residues on the cytoplasmic tails of the receptor, creating docking sites for STATs proteins. Subsequently, phosphorylates the STATs proteins once they are recruited to the receptor. Phosphorylated STATs then form homodimer or heterodimers and translocate to the nucleus to activate gene transcription. For example, cell stimulation with erythropoietin (EPO) during erythropoiesis leads to JAK2 autophosphorylation, activation, and its association with erythropoietin receptor (EPOR) that becomes phosphorylated in its cytoplasmic domain. Then, STAT5 (STAT5A or STAT5B) is recruited, phosphorylated and activated by JAK2. Once activated, dimerized STAT5 translocates into the nucleus and promotes the transcription of several essential genes involved in the modulation of erythropoiesis. Part of a signaling cascade that is activated by increased cellular retinol and that leads to the activation of STAT5 (STAT5A or STAT5B). In addition, JAK2 mediates angiotensin-2-induced ARHGEF1 phosphorylation. Plays a role in cell cycle by phosphorylating CDKN1B. Cooperates with TEC through reciprocal phosphorylation to mediate cytokine-driven activation of FOS transcription. In the nucleus, plays a key role in chromatin by specifically mediating phosphorylation of 'Tyr-41' of histone H3 (H3Y41ph), a specific tag that promotes exclusion of CBX5 (HP1 alpha) from chromatin. Up-regulates the potassium voltage-gated channel activity of KCNA3. This is Tyrosine-protein kinase JAK2 from Pongo abelii (Sumatran orangutan).